A 348-amino-acid chain; its full sequence is Protein RecA (348 aa).

Gly-65–Thr-72 contacts ATP.

The protein belongs to the RecA family.

Its subcellular location is the cytoplasm. Can catalyze the hydrolysis of ATP in the presence of single-stranded DNA, the ATP-dependent uptake of single-stranded DNA by duplex DNA, and the ATP-dependent hybridization of homologous single-stranded DNAs. It interacts with LexA causing its activation and leading to its autocatalytic cleavage. This is Protein RecA from Vibrio anguillarum (Listonella anguillarum).